Consider the following 641-residue polypeptide: WW domain-binding protein 11 (641 aa).

The segment covering Met-1–Ser-11 has biased composition (polar residues). Residues Met-1–Arg-37 form a disordered region. The tract at residues Met-1–Leu-45 is required for nuclear import. Lys-13 carries the post-translational modification N6-acetyllysine. The span at Arg-28–Arg-37 shows a compositional bias: basic residues. The stretch at Glu-75–His-133 forms a coiled coil. Ser-181 carries the post-translational modification Phosphoserine. The tract at residues Leu-186 to Gln-213 is disordered. Position 192 is an omega-N-methylarginine (Arg-192). Over residues Arg-192 to Gln-210 the composition is skewed to pro residues. Residues Arg-217 to Phe-221 form an interaction with PP1 region. The residue at position 236 (Tyr-236) is a Phosphotyrosine. Residues Tyr-236–Ala-549 form a disordered region. Ser-237 carries the phosphoserine modification. The span at Ser-253–Asp-263 shows a compositional bias: acidic residues. Over residues Thr-276–Ser-304 the composition is skewed to basic and acidic residues. Residues Ser-279 and Ser-283 each carry the phosphoserine modification. The interaction with PP1 stretch occupies residues Leu-306–Phe-310. Residues Glu-351 to Glu-365 show a composition bias toward acidic residues. Phosphoserine is present on residues Ser-353, Ser-361, and Ser-364. Residues Ala-366 to Ala-380 are compositionally biased toward basic and acidic residues. Residues Asp-381–Ala-404 show a composition bias toward low complexity. Pro residues-rich tracts occupy residues Pro-405–Met-447, Arg-456–Pro-504, and Pro-510–Asn-530. A PGR motif is present at residues Pro-455–Arg-466. Residue Lys-557 forms a Glycyl lysine isopeptide (Lys-Gly) (interchain with G-Cter in SUMO2) linkage. At Lys-565 the chain carries N6-acetyllysine. Lys-572 participates in a covalent cross-link: Glycyl lysine isopeptide (Lys-Gly) (interchain with G-Cter in SUMO2). Residues Glu-588–Val-623 form a disordered region. Ser-600 carries the phosphoserine modification.

In terms of assembly, interacts with PPP1CA, PPP1CB and PPP1CC. Interacts via the PGR motif with PQBP1 in the nucleus. Interacts with the WW domains of WBP4.

Its subcellular location is the nucleus. It is found in the cytoplasm. In terms of biological role, activates pre-mRNA splicing. May inhibit PP1 phosphatase activity. This Rattus norvegicus (Rat) protein is WW domain-binding protein 11 (Wbp11).